Here is a 310-residue protein sequence, read N- to C-terminus: Cytochrome f (310 aa).

The signal sequence occupies residues methionine 1 to alanine 27. Tyrosine 28, cysteine 48, cysteine 51, and histidine 52 together coordinate heme. A helical membrane pass occupies residues isoleucine 277–lysine 297.

Belongs to the cytochrome f family. As to quaternary structure, the 4 large subunits of the cytochrome b6-f complex are cytochrome b6, subunit IV (17 kDa polypeptide, PetD), cytochrome f and the Rieske protein, while the 4 small subunits are PetG, PetL, PetM and PetN. The complex functions as a dimer. Heme is required as a cofactor.

The protein resides in the cellular thylakoid membrane. Functionally, component of the cytochrome b6-f complex, which mediates electron transfer between photosystem II (PSII) and photosystem I (PSI), cyclic electron flow around PSI, and state transitions. In Synechococcus sp. (strain CC9605), this protein is Cytochrome f.